A 434-amino-acid polypeptide reads, in one-letter code: D-amino acid dehydrogenase (434 aa).

An FAD-binding site is contributed by 3–17 (VIVLGSGVIGTTTAY).

Belongs to the DadA oxidoreductase family. FAD serves as cofactor.

The enzyme catalyses a D-alpha-amino acid + A + H2O = a 2-oxocarboxylate + AH2 + NH4(+). It functions in the pathway amino-acid degradation; D-alanine degradation; NH(3) and pyruvate from D-alanine: step 1/1. In terms of biological role, oxidative deamination of D-amino acids. The chain is D-amino acid dehydrogenase from Bordetella petrii (strain ATCC BAA-461 / DSM 12804 / CCUG 43448).